A 105-amino-acid polypeptide reads, in one-letter code: ATP synthase F(0) complex subunit a (105 aa).

3 helical membrane passes run 14 to 34, 47 to 67, and 72 to 92; these read EGTP…SLFI, LTAG…LLPM, and AILT…VAMI.

This sequence belongs to the ATPase A chain family. In terms of assembly, component of the ATP synthase complex composed at least of ATP5F1A/subunit alpha, ATP5F1B/subunit beta, ATP5MC1/subunit c (homooctomer), MT-ATP6/subunit a, MT-ATP8/subunit 8, ATP5ME/subunit e, ATP5MF/subunit f, ATP5MG/subunit g, ATP5MK/subunit k, ATP5MJ/subunit j, ATP5F1C/subunit gamma, ATP5F1D/subunit delta, ATP5F1E/subunit epsilon, ATP5PF/subunit F6, ATP5PB/subunit b, ATP5PD/subunit d, ATP5PO/subunit OSCP. ATP synthase complex consists of a soluble F(1) head domain (subunits alpha(3) and beta(3)) - the catalytic core - and a membrane F(0) domain - the membrane proton channel (subunits c, a, 8, e, f, g, k and j). These two domains are linked by a central stalk (subunits gamma, delta, and epsilon) rotating inside the F1 region and a stationary peripheral stalk (subunits F6, b, d, and OSCP). Interacts with DNAJC30; interaction is direct.

It localises to the mitochondrion inner membrane. The enzyme catalyses H(+)(in) = H(+)(out). Functionally, subunit a, of the mitochondrial membrane ATP synthase complex (F(1)F(0) ATP synthase or Complex V) that produces ATP from ADP in the presence of a proton gradient across the membrane which is generated by electron transport complexes of the respiratory chain. ATP synthase complex consist of a soluble F(1) head domain - the catalytic core - and a membrane F(1) domain - the membrane proton channel. These two domains are linked by a central stalk rotating inside the F(1) region and a stationary peripheral stalk. During catalysis, ATP synthesis in the catalytic domain of F(1) is coupled via a rotary mechanism of the central stalk subunits to proton translocation. With the subunit c (ATP5MC1), forms the proton-conducting channel in the F(0) domain, that contains two crucial half-channels (inlet and outlet) that facilitate proton movement from the mitochondrial intermembrane space (IMS) into the matrix. Protons are taken up via the inlet half-channel and released through the outlet half-channel, following a Grotthuss mechanism. This Salmo trutta (Brown trout) protein is ATP synthase F(0) complex subunit a.